We begin with the raw amino-acid sequence, 476 residues long: Glycogen synthase (476 aa).

Lys-15 is a binding site for ADP-alpha-D-glucose.

It belongs to the glycosyltransferase 1 family. Bacterial/plant glycogen synthase subfamily.

The enzyme catalyses [(1-&gt;4)-alpha-D-glucosyl](n) + ADP-alpha-D-glucose = [(1-&gt;4)-alpha-D-glucosyl](n+1) + ADP + H(+). The protein operates within glycan biosynthesis; glycogen biosynthesis. In terms of biological role, synthesizes alpha-1,4-glucan chains using ADP-glucose. The sequence is that of Glycogen synthase from Yersinia pestis bv. Antiqua (strain Antiqua).